The following is a 102-amino-acid chain: Small ribosomal subunit protein bS18c (102 aa).

Belongs to the bacterial ribosomal protein bS18 family. Part of the 30S ribosomal subunit.

It localises to the plastid. The protein resides in the chloroplast. The sequence is that of Small ribosomal subunit protein bS18c from Phaseolus vulgaris (Kidney bean).